A 130-amino-acid polypeptide reads, in one-letter code: Small ribosomal subunit protein uS8 (130 aa).

Belongs to the universal ribosomal protein uS8 family. In terms of assembly, part of the 30S ribosomal subunit.

Its function is as follows. One of the primary rRNA binding proteins, it binds directly to 16S rRNA central domain where it helps coordinate assembly of the platform of the 30S subunit. The polypeptide is Small ribosomal subunit protein uS8 (Halobacterium salinarum (strain ATCC 29341 / DSM 671 / R1)).